We begin with the raw amino-acid sequence, 86 residues long: Neurotoxin 3FTx-LT (86 aa).

Positions 1 to 21 are cleaved as a signal peptide; it reads MKTLLLTLVVVTIVCLDLGYT. Disulfide bonds link cysteine 24/cysteine 45, cysteine 27/cysteine 32, cysteine 38/cysteine 63, cysteine 67/cysteine 78, and cysteine 79/cysteine 84.

In terms of tissue distribution, expressed by the venom gland.

The protein localises to the secreted. In terms of biological role, binds with low affinity to muscular (alpha-1-beta-1-delta-epsilon/CHRNA1-CHRNB1-CHRND-CHRNE) and very low affinity to neuronal (alpha-7/CHRNA7) nicotinic acetylcholine receptor (nAChR). This Bungarus fasciatus (Banded krait) protein is Neurotoxin 3FTx-LT.